The chain runs to 1305 residues: Adenylate cyclase type 9 (1305 aa).

The Cytoplasmic portion of the chain corresponds to 1–110 (MASPVNQQLL…CFPQTQRRFR (110 aa)). Low complexity predominate over residues 46-55 (ISSSCSSGES). A disordered region spans residues 46–71 (ISSSCSSGESGVKKTGGSGGARRQKK). The helical transmembrane segment at 111 to 131 (YALMYLSVAGLLWSIYFSVHM) threads the bilayer. Topologically, residues 132 to 134 (KTK) are extracellular. The helical transmembrane segment at 135–155 (LVSHLVPTLCFLIVCLGFFFF) threads the bilayer. The Cytoplasmic segment spans residues 156-164 (TFTKSYARH). The chain crosses the membrane as a helical span at residues 165–185 (CTAISLLVTLLVFTLTLASQF). At 186–209 (QVLNPGLGSDSLSNLTSFSATGSS) the chain is on the extracellular side. The N-linked (GlcNAc...) asparagine glycan is linked to N199. The helical transmembrane segment at 210–229 (SCLSQVGSFSICVEVLLLLY) threads the bilayer. At 230-235 (TVMHLP) the chain is on the cytoplasmic side. A helical membrane pass occupies residues 236 to 253 (LYLSACLGVAYSILFETF). Residues 254 to 274 (GYHFRDESCFVLLVGRMAHWE) are Extracellular-facing. Residues 275-295 (LLSKALLHVCIHAIGVHLFIM) form a helical membrane-spanning segment. At 296–778 (SEVRSRSTFL…VKTFASATFS (483 aa)) the chain is on the cytoplasmic side. The tract at residues 343–369 (QGDDESENSVKRHSASSPKSRKKKSSI) is disordered. A compositionally biased stretch (basic residues) spans 353 to 368 (KRHSASSPKSRKKKSS). Positions 393, 394, and 437 each coordinate Mg(2+). ATP is bound by residues 393-398 (DIVGFT), 435-437 (LGD), and R481. Composition is skewed to polar residues over residues 607 to 618 (SDSHTNCTQPET) and 670 to 680 (ESSTGDTLTNS). Residues 607-680 (SDSHTNCTQP…SSTGDTLTNS (74 aa)) form a disordered region. A helical transmembrane segment spans residues 779 to 799 (SLQDVLLNYFIFVLLSVACLL). Over 800–810 (KPGTNTVSPPT) the chain is Extracellular. The chain crosses the membrane as a helical span at residues 811–831 (LALVLLSVCGLLGFLSLLVSV). Residues 832 to 859 (RMAFYLEDMLLCTRRLLEIISGWVPRHF) are Cytoplasmic-facing. A helical membrane pass occupies residues 860–880 (IGTVLVCLPAAVIFSYLSSDF). Over 881 to 883 (YTD) the chain is Extracellular. Residues 884 to 904 (IHYTMFLCSALLIPMVQYCNF) form a helical membrane-spanning segment. The Cytoplasmic segment spans residues 905–911 (CQLSSSA). The helical transmembrane segment at 912–932 (LLLATITGATMLILIYLPLCP) threads the bilayer. Over 933–966 (QRPPLDPGTDIEANLSTSNSSYETLDNPRTELPF) the chain is Extracellular. 2 N-linked (GlcNAc...) asparagine glycosylation sites follow: N946 and N951. The helical transmembrane segment at 967–987 (TRLGQEIAVAYFLLLLLVWFL) threads the bilayer. At 988 to 1305 (NREFDVSYRL…EERGRDGGAR (318 aa)) the chain is on the cytoplasmic side. ATP is bound by residues K1099, 1176–1178 (DIW), 1183–1187 (NIASR), and K1223. The segment at 1261–1305 (SIGRSPTDEISSLVTGGKGAVELGSGEAERKREKAEERGRDGGAR) is disordered. Positions 1287-1305 (EAERKREKAEERGRDGGAR) are enriched in basic and acidic residues.

It belongs to the adenylyl cyclase class-4/guanylyl cyclase family. Mg(2+) is required as a cofactor. Mn(2+) serves as cofactor. In terms of tissue distribution, detected in oocytes.

It is found in the cell membrane. The catalysed reaction is ATP = 3',5'-cyclic AMP + diphosphate. Its function is as follows. Adenylyl cyclase that catalyzes the formation of the signaling molecule cAMP in response to activation of G protein-coupled receptors. This Xenopus laevis (African clawed frog) protein is Adenylate cyclase type 9 (adcy9).